Consider the following 413-residue polypeptide: E3 ubiquitin-protein ligase makorin (413 aa).

2 C3H1-type zinc fingers span residues 2-29 (PRHETDCRYFANGYCSKGNTCTFTHDVA) and 30-57 (TRNENICHFNLVGKCSYGRACRFLHTRP). Residues 61–85 (ELPSCSTPQTSQNQQNLQNSGQRVR) are disordered. Over residues 66 to 82 (STPQTSQNQQNLQNSGQ) the composition is skewed to low complexity. A C3H1-type 3 zinc finger spans residues 138–167 (QAQLMMCPYHQKSGDCNRQDMDCPFAHGNY). Residues 213–267 (CGICMENIFEKNLRFGILNGCQHCFCLDCIRQWRSKDQENVELATKTVRSCPECR) form an RING-type zinc finger. The segment at 296–327 (NTKRKICKYYSNERSRGACPFGNKCFYKHQLP) adopts a C3H1-type 4 zinc-finger fold.

Component of a complex at least containing lep-2, lin-28 and the long non-coding RNA lep-5, which mediates the degradation of lin-28. As to expression, expressed in seam, tail tip, and other hypodermal cells, head and tail neurons, the pharynx, intestine and the developing hermaphrodite somatic gonad. Not expressed in body wall muscle cells.

It is found in the cytoplasm. The enzyme catalyses S-ubiquitinyl-[E2 ubiquitin-conjugating enzyme]-L-cysteine + [acceptor protein]-L-lysine = [E2 ubiquitin-conjugating enzyme]-L-cysteine + N(6)-ubiquitinyl-[acceptor protein]-L-lysine.. It functions in the pathway protein modification; protein ubiquitination. Functionally, E3 ubiquitin ligase which catalyzes the covalent attachment of ubiquitin moieties onto substrate proteins. Promotes the larval to adult transition by binding to the long non-coding RNA lep-5 to target the heterochronic protein lin-28 for degradation by the proteasome. This association and degradation of lin-28 also controls the timing of the sexual differentiation of individual neurons in males including the AIM, AWA, ADF, ASJ and CEM neurons. Plays a role in governing the developmental timing of male tail tip morphogenesis. Plays a role in two aspects of male mating behavior: response to hermaphrodite contact and vulva location. May play a role in the detection of preferred food sources. The polypeptide is E3 ubiquitin-protein ligase makorin (Caenorhabditis elegans).